The sequence spans 209 residues: High frequency lysogenization protein HflD homolog (209 aa).

Belongs to the HflD family.

It is found in the cytoplasm. Its subcellular location is the cell inner membrane. The sequence is that of High frequency lysogenization protein HflD homolog from Marinomonas sp. (strain MWYL1).